Here is a 170-residue protein sequence, read N- to C-terminus: Urease accessory protein UreE (170 aa).

This sequence belongs to the UreE family.

The protein localises to the cytoplasm. In terms of biological role, involved in urease metallocenter assembly. Binds nickel. Probably functions as a nickel donor during metallocenter assembly. The protein is Urease accessory protein UreE of Helicobacter pylori (strain P12).